We begin with the raw amino-acid sequence, 297 residues long: Thoeris protein ThsA (297 aa).

Transmembrane regions (helical) follow at residues 32–52 (ALSIILTIPTSVSTFISFLDL) and 57–77 (RLIILLILVGLSLVIIIVQFI).

The protein resides in the cell membrane. Activated by a signal molecule generated by ThsB. Probable membrane protein component of the Thoeris antiviral defense system, composed of ThsA and ThsB. Expression of ThsA and ThsB in B.subtilis (strain BEST7003) confers resistance to phages SBSphiC, SBSphiJ and SPO1. Activation by a signal generated by ThsB leads to phage resistance. The sequence is that of Thoeris protein ThsA from Bacillus amyloliquefaciens (strain Y2) (Bacillus amyloliquefaciens subsp. plantarum (strain B9601-Y2)).